A 730-amino-acid chain; its full sequence is Cyclin-T2 (730 aa).

Positions 1–300 (MASGRGASSR…SVTGVPTNPS (300 aa)) are interaction with MDFIC and MDFI. The Cyclin N-terminal domain maps to 12–147 (FFTREQLENT…IMLQTLGFEI (136 aa)). Positions 250-300 (RLKKIRNWRANQAARKPKVDGQVSETPLLGSSLVQNSILVDSVTGVPTNPS) are interaction with POLR2A. Polar residues-rich tracts occupy residues 341 to 350 (TSYGLSSHQE) and 360 to 389 (TEQL…SISL). The segment at 341–430 (TSYGLSSHQE…GPISTTPGII (90 aa)) is disordered. The segment covering 398–412 (DKISDHSSVKQEYTH) has biased composition (basic and acidic residues). Lysine 407 participates in a covalent cross-link: Glycyl lysine isopeptide (Lys-Gly) (interchain with G-Cter in SUMO2). Serine 480 carries the post-translational modification Phosphoserine. The segment at 497 to 652 (DKKEKSGSLK…SSSSSSSSVK (156 aa)) is disordered. 2 stretches are compositionally biased toward basic and acidic residues: residues 517-543 (SASK…EGSG) and 552-565 (ISRD…EHPS). Positions 566–578 (SRHHTSSHKHSHS) are enriched in basic residues. The span at 579–588 (HSGSSSGGSK) shows a compositional bias: low complexity. Serine 601 bears the Phosphoserine mark. Low complexity-rich tracts occupy residues 606-616 (SSDGISSSSSS) and 637-652 (SSKS…SSVK).

It belongs to the cyclin family. Cyclin C subfamily. In terms of assembly, interacts with CDK9 to form P-TEFb. Interacts with POLR2A (via the C-terminal domain (CTD)); mediates transcriptional activity. Interacts with HEXIM1; mediates formation of a tripartite complex with KPNA2. Interacts with HEXIM2. Interacts with PKN1; enhances MYOD1-dependent transcription. P-TEFB complex interacts with RB1; promotes phosphorylation of RB1. P-TEFB complex interacts with MYOD1; promotes the transcriptional activity of MYOD1 through its CDK9-mediated phosphorylation. Interacts with MDFI and MDFIC. Interacts with MON1B; down-regulates CCNT2-mediated activation of viral promoters during herpes simplex virus 1/HHV-1 infection. As to quaternary structure, (Microbial infection) Interacts with HIV-2 and SIV Tat. Does not bind efficiently to the transactivation domain of the HIV-1 Tat. Ubiquitously expressed.

It is found in the cytoplasm. The protein resides in the perinuclear region. It localises to the nucleus. Functionally, regulatory subunit of the cyclin-dependent kinase pair (CDK9/cyclin T) complex, also called positive transcription elongation factor B (P-TEFB), which is proposed to facilitate the transition from abortive to production elongation by phosphorylating the CTD (carboxy-terminal domain) of the large subunit of RNA polymerase II (RNAP II). The activity of this complex is regulated by binding with 7SK snRNA. Plays a role during muscle differentiation; P-TEFB complex interacts with MYOD1; this tripartite complex promotes the transcriptional activity of MYOD1 through its CDK9-mediated phosphorylation and binds the chromatin of promoters and enhancers of muscle-specific genes; this event correlates with hyperphosphorylation of the CTD domain of RNA pol II. In addition, enhances MYOD1-dependent transcription through interaction with PKN1. Involved in early embryo development. In terms of biological role, (Microbial infection) Promotes transcriptional activation of early and late herpes simplex virus 1/HHV-1 promoters. This is Cyclin-T2 from Homo sapiens (Human).